Consider the following 621-residue polypeptide: MSARRVTLNTRVSRASTSTPVGGASTSSRVGATSPTSPTRTSRQQEKEELQHLNDRLACYIDRMRNLENENSRLTQELNLAQDTVNRETSNLKAVYEKELAAARKLLDETAKEKAKLEIDIKRLWEENDDLKPRLDKKTKEATVAENNARLYENRYNEVNGKYNQSLADRKKFEDQAKELALENERLRRQLDDLRKQLEAETLARVDLENQNQSLREELAFKDQVHTQELTETRSRRQIEISEIDGRLSRQYEAKLQQSLQELRDQYEGQMRINREEIELLYDNEIQNLKAAANRAAQGSALATEEVRLMRTKIDGLNAKLQNLEDTNAGLNARIRELENLLDTERQRHNQYIASLEAELQRMRDEMAHQLQEYQGLMDIKVSLDLEIAAYDKLLCGEERRLNIESPGRPTTDSGISSNGSHLTASASSRSGRVTPSGRRSATPGISGSSAVKRRRTVIDESEDRTLSEYSVNAAAKGDLEIIEADVEGRFIKLHNKGTEEINLTGWQLTRIAGDEELAFKFSRGSKVLGGASVTIWSVDAGTAHDPPNNLVMKKKWPVANSMRSVLANADKEDVASYDRVRANVSSHTSRHRSSGTPSTGFTLGSGAGSTGVRSLFSLLF.

The disordered stretch occupies residues 1–47; sequence MSARRVTLNTRVSRASTSTPVGGASTSSRVGATSPTSPTRTSRQQEK. Residues 1-47 are head; sequence MSARRVTLNTRVSRASTSTPVGGASTSSRVGATSPTSPTRTSRQQEK. The span at 7–31 shows a compositional bias: polar residues; the sequence is TLNTRVSRASTSTPVGGASTSSRVG. The segment covering 33 to 42 has biased composition (low complexity); the sequence is TSPTSPTRTS. Ser-34 bears the Phosphoserine mark. The IF rod domain occupies 46-402; sequence EKEELQHLND…KLLCGEERRL (357 aa). A coil 1A region spans residues 47-85; the sequence is KEELQHLNDRLACYIDRMRNLENENSRLTQELNLAQDTV. Positions 86–95 are linker 1; the sequence is NRETSNLKAV. The tract at residues 96–233 is coil 1B; sequence YEKELAAARK…QVHTQELTET (138 aa). The segment at 234-257 is linker 2; sequence RSRRQIEISEIDGRLSRQYEAKLQ. Positions 258 to 403 are coil 2; sequence QSLQELRDQY…LLCGEERRLN (146 aa). Positions 404–458 are disordered; it reads IESPGRPTTDSGISSNGSHLTASASSRSGRVTPSGRRSATPGISGSSAVKRRRTV. Positions 404-621 are tail; sequence IESPGRPTTD…GVRSLFSLLF (218 aa). 2 positions are modified to phosphoserine: Ser-406 and Ser-441. A compositionally biased stretch (polar residues) spans 409-450; it reads RPTTDSGISSNGSHLTASASSRSGRVTPSGRRSATPGISGSS. Position 443 is a phosphothreonine (Thr-443). The Nuclear localization signal signature appears at 453-458; the sequence is KRRRTV. The LTD domain occupies 468–582; sequence SEYSVNAAAK…EDVASYDRVR (115 aa). Positions 585 to 605 are disordered; that stretch reads VSSHTSRHRSSGTPSTGFTLG.

It belongs to the intermediate filament family. Interacts with MAN1. As to expression, first detected from late stage 12 in the oenocytes, abdominal segments, hindgut and posterior spiracles, with expression increasing in stage 13 (at protein level). In stage 14, also becomes detectable in the foregut (at protein level). Stage 15 shows expression in the epidermis, dorsal longitudinal trunk, pharynx, esophagus and proventriculus, with the dorsal pharyngeal musculature showing expression in late stage 15 (at protein level). In stage 16 embryos, also detected in the exit glia with increasing expression in the somatic musculature (at protein level). Also detected in the visceral mesoderm but not in the midgut or central nervous system until the end of embryogenesis (at protein level). In third instar larvae, detectable at varying levels in all cell types (at protein level). Expressed in spermatocytes (at protein level).

It is found in the nucleus. The protein resides in the nucleus lamina. In terms of biological role, lamins are components of the nuclear lamina, a fibrous layer on the nucleoplasmic side of the inner nuclear membrane, which is thought to provide a framework for the nuclear envelope and may also interact with chromatin. In spermatocytes, regulates cytokinesis during meiosis. This Drosophila melanogaster (Fruit fly) protein is Lamin-C (LamC).